The sequence spans 140 residues: MAIERTFSMIKPDATRRNLTGAITAKLEAAGLRVVASKRVWMSLREAEGFYAVHKDRPFFGELTEFMSSGPTIVQVLEGENAIAKNREVMGATNPANADEGTIRKEFALSIGENSVHGSDAPETAAEEIAYWFSGTEIVG.

6 residues coordinate ATP: Lys11, Phe59, Arg87, Thr93, Arg104, and Asn114. The active-site Pros-phosphohistidine intermediate is the His117.

The protein belongs to the NDK family. As to quaternary structure, homotetramer. Requires Mg(2+) as cofactor.

It localises to the cytoplasm. The catalysed reaction is a 2'-deoxyribonucleoside 5'-diphosphate + ATP = a 2'-deoxyribonucleoside 5'-triphosphate + ADP. It carries out the reaction a ribonucleoside 5'-diphosphate + ATP = a ribonucleoside 5'-triphosphate + ADP. Functionally, major role in the synthesis of nucleoside triphosphates other than ATP. The ATP gamma phosphate is transferred to the NDP beta phosphate via a ping-pong mechanism, using a phosphorylated active-site intermediate. The chain is Nucleoside diphosphate kinase from Brucella anthropi (strain ATCC 49188 / DSM 6882 / CCUG 24695 / JCM 21032 / LMG 3331 / NBRC 15819 / NCTC 12168 / Alc 37) (Ochrobactrum anthropi).